The primary structure comprises 157 residues: Endoribonuclease YbeY (157 aa).

Residues histidine 116, histidine 120, and histidine 126 each coordinate Zn(2+).

The protein belongs to the endoribonuclease YbeY family. The cofactor is Zn(2+).

It is found in the cytoplasm. Its function is as follows. Single strand-specific metallo-endoribonuclease involved in late-stage 70S ribosome quality control and in maturation of the 3' terminus of the 16S rRNA. The protein is Endoribonuclease YbeY of Arthrobacter sp. (strain FB24).